Here is a 159-residue protein sequence, read N- to C-terminus: NAD(P)H-quinone oxidoreductase subunit J, chloroplastic (159 aa).

It belongs to the complex I 30 kDa subunit family. As to quaternary structure, NDH is composed of at least 16 different subunits, 5 of which are encoded in the nucleus.

It localises to the plastid. The protein resides in the chloroplast thylakoid membrane. It catalyses the reaction a plastoquinone + NADH + (n+1) H(+)(in) = a plastoquinol + NAD(+) + n H(+)(out). It carries out the reaction a plastoquinone + NADPH + (n+1) H(+)(in) = a plastoquinol + NADP(+) + n H(+)(out). In terms of biological role, NDH shuttles electrons from NAD(P)H:plastoquinone, via FMN and iron-sulfur (Fe-S) centers, to quinones in the photosynthetic chain and possibly in a chloroplast respiratory chain. The immediate electron acceptor for the enzyme in this species is believed to be plastoquinone. Couples the redox reaction to proton translocation, and thus conserves the redox energy in a proton gradient. This is NAD(P)H-quinone oxidoreductase subunit J, chloroplastic from Agrostis stolonifera (Creeping bentgrass).